Here is a 364-residue protein sequence, read N- to C-terminus: Dual-specificity RNA methyltransferase RlmN (364 aa).

Residue Glu-91 is the Proton acceptor of the active site. In terms of domain architecture, Radical SAM core spans 102–337 (GTLRITQCLS…AIIRKSKGQD (236 aa)). Cys-109 and Cys-342 form a disulfide bridge. [4Fe-4S] cluster is bound by residues Cys-116, Cys-120, and Cys-123. S-adenosyl-L-methionine-binding positions include 169–170 (GE), Ser-201, 223–225 (SLH), and Asn-299. Cys-342 serves as the catalytic S-methylcysteine intermediate.

It belongs to the radical SAM superfamily. RlmN family. The cofactor is [4Fe-4S] cluster.

It is found in the cytoplasm. The catalysed reaction is adenosine(2503) in 23S rRNA + 2 reduced [2Fe-2S]-[ferredoxin] + 2 S-adenosyl-L-methionine = 2-methyladenosine(2503) in 23S rRNA + 5'-deoxyadenosine + L-methionine + 2 oxidized [2Fe-2S]-[ferredoxin] + S-adenosyl-L-homocysteine. It catalyses the reaction adenosine(37) in tRNA + 2 reduced [2Fe-2S]-[ferredoxin] + 2 S-adenosyl-L-methionine = 2-methyladenosine(37) in tRNA + 5'-deoxyadenosine + L-methionine + 2 oxidized [2Fe-2S]-[ferredoxin] + S-adenosyl-L-homocysteine. Specifically methylates position 2 of adenine 2503 in 23S rRNA and position 2 of adenine 37 in tRNAs. m2A2503 modification seems to play a crucial role in the proofreading step occurring at the peptidyl transferase center and thus would serve to optimize ribosomal fidelity. The chain is Dual-specificity RNA methyltransferase RlmN from Nitratidesulfovibrio vulgaris (strain ATCC 29579 / DSM 644 / CCUG 34227 / NCIMB 8303 / VKM B-1760 / Hildenborough) (Desulfovibrio vulgaris).